The sequence spans 930 residues: MAGKARVHELAKELGVTSKEVLARLSEQGEFVKSASSTVEAPVARRLRESYGGSKSDKTKAAPSGNGAAGATVKPSAPQSRPGPKPGPPVAQQPAAPAAPPAAPPAPPTPAAAPPSPAPAAPAAATPAEPAAPSARPGPTPGPRPGPSAPKPGAPKPAARTPRVGNNPFSSQQPVERPAPRPQGPGGPRPGPGAGGPRPGGGPRPGASPGSMPPRPQGARPGGGPRPGGGPRPGGGPRPTPGGAGRPGGGGGGGGNYRGGGAGGGAPAAGGGGFRGRPGGGGGGGRPGQRGGAAGAFGRPGGAPKRGRKSKRAKRAEYENMQAPVVGGVRLPHGNGETIRLARGASLSDFAEKINANPASLVQALFNLGEMVTATQSVGDETLELLGGEMNYVVQVVSPEDEDRELLESFDLTYGEDEGGEEDLEIRPPVVTVMGHVDHGKTRLLDTIRNATVREGEAGGITQHIGAYQVTVDLDGTERPITFIDTPGHEAFTAMRARGAKATDIAILVVAADDGVMPQTVEAINHAQAADVPIVVAVNKIDKEGADPAKIRGQLTEYGLVPEEYGGDAMFVDISAKQGTNIEALLEAVILTADASLDLRANPDMEAQGVAIEAHLDRGRGPVATVLIQRGTLRVGDSVVAGDAYGRVRRMVDEHGEDVEEALPSRPVQVIGFTSVPGAGDNFLVVDEDRIARQIADRRSARKRNALAARTRKRISLEDLDSALKETSQLNLILKGDNSGTVEALEEALLGIQVDDEVELRVIDRGVGGVTETNVNLASASDAIIIGFNVRAEGKATELANREGVEIRYYSIIYQAIDEIESALKGMLKPVYEEKELGRAEIRAIFRSSKVGNIAGCLVQSGIMRRNAKARLLRDNVVVAENLTISSLKREKDDVTEVRDGYECGLTLTYSDIKEGDVIETYELVEKART.

Positions Gly29–Ala316 are disordered. Pro residues predominate over residues Arg81–Ala120. The span at Ala121 to Ala135 shows a compositional bias: low complexity. 2 stretches are compositionally biased toward pro residues: residues Arg136 to Pro155 and Pro180 to Gly191. Over residues Pro192–Arg204 the composition is skewed to gly residues. Positions Gly228–Thr240 are enriched in pro residues. Gly residues predominate over residues Pro241–Gly301. A compositionally biased stretch (basic residues) spans Lys305–Lys314. Residues Ile426–Asp598 enclose the tr-type G domain. A G1 region spans residues Gly435 to Thr442. Gly435–Thr442 serves as a coordination point for GTP. The G2 stretch occupies residues Gly460–His464. The segment at Asp485–Gly488 is G3. GTP is bound by residues Asp485–His489 and Asn539–Asp542. The interval Asn539–Asp542 is G4. The tract at residues Ser575–Lys577 is G5.

The protein belongs to the TRAFAC class translation factor GTPase superfamily. Classic translation factor GTPase family. IF-2 subfamily.

It localises to the cytoplasm. Functionally, one of the essential components for the initiation of protein synthesis. Protects formylmethionyl-tRNA from spontaneous hydrolysis and promotes its binding to the 30S ribosomal subunits. Also involved in the hydrolysis of GTP during the formation of the 70S ribosomal complex. This is Translation initiation factor IF-2 from Mycolicibacterium vanbaalenii (strain DSM 7251 / JCM 13017 / BCRC 16820 / KCTC 9966 / NRRL B-24157 / PYR-1) (Mycobacterium vanbaalenii).